Reading from the N-terminus, the 352-residue chain is Gamma-aminobutyric acid-binding protein (352 aa).

An N-terminal signal peptide occupies residues 1 to 28; sequence MFKSLHQYAHVFSRLSLFGLAFAAAAQA.

It belongs to the bacterial solute-binding protein 1 family.

The protein resides in the periplasm. Binds specifically gamma-aminobutyric acid (GABA) with nanomolar affinity. Does not bind structurally related compounds such as 4-aminovaleric acid, spermidine, histamine and butyric acid. In Pseudomonas aeruginosa (strain ATCC 15692 / DSM 22644 / CIP 104116 / JCM 14847 / LMG 12228 / 1C / PRS 101 / PAO1), this protein is Gamma-aminobutyric acid-binding protein.